The following is a 30-amino-acid chain: Proteinase inhibitor CeKI (30 aa).

Belongs to the protease inhibitor I3 (leguminous Kunitz-type inhibitor) family.

In terms of biological role, potent inhibitor of serine proteases plasma kallikrein, plasmin and coagulation factor XIIa. Weak inhibitor of serine proteases trypsin and coagulation factor Xa. Does not inhibit the serine proteases chymotrypsin, elastase or thrombin. Inhibits kinin release from HMW-kininogen by kallikrein in vitro. This chain is Proteinase inhibitor CeKI, found in Paubrasilia echinata (Pau Brasil).